Consider the following 149-residue polypeptide: 3-dehydroquinate dehydratase (149 aa).

The active-site Proton acceptor is the Tyr-26. Residues Asn-75, His-81, and Asp-88 each contribute to the substrate site. His-101 acts as the Proton donor in catalysis. Substrate is bound by residues 102–103 (LS) and Arg-112.

Belongs to the type-II 3-dehydroquinase family. Homododecamer.

The enzyme catalyses 3-dehydroquinate = 3-dehydroshikimate + H2O. It functions in the pathway metabolic intermediate biosynthesis; chorismate biosynthesis; chorismate from D-erythrose 4-phosphate and phosphoenolpyruvate: step 3/7. Catalyzes a trans-dehydration via an enolate intermediate. The protein is 3-dehydroquinate dehydratase of Shewanella woodyi (strain ATCC 51908 / MS32).